Reading from the N-terminus, the 479-residue chain is Aspartyl/glutamyl-tRNA(Asn/Gln) amidotransferase subunit B (479 aa).

The protein belongs to the GatB/GatE family. GatB subfamily. Heterotrimer of A, B and C subunits.

The enzyme catalyses L-glutamyl-tRNA(Gln) + L-glutamine + ATP + H2O = L-glutaminyl-tRNA(Gln) + L-glutamate + ADP + phosphate + H(+). It catalyses the reaction L-aspartyl-tRNA(Asn) + L-glutamine + ATP + H2O = L-asparaginyl-tRNA(Asn) + L-glutamate + ADP + phosphate + 2 H(+). Functionally, allows the formation of correctly charged Asn-tRNA(Asn) or Gln-tRNA(Gln) through the transamidation of misacylated Asp-tRNA(Asn) or Glu-tRNA(Gln) in organisms which lack either or both of asparaginyl-tRNA or glutaminyl-tRNA synthetases. The reaction takes place in the presence of glutamine and ATP through an activated phospho-Asp-tRNA(Asn) or phospho-Glu-tRNA(Gln). The chain is Aspartyl/glutamyl-tRNA(Asn/Gln) amidotransferase subunit B from Streptococcus pyogenes serotype M28 (strain MGAS6180).